The primary structure comprises 417 residues: UDP-N-acetylglucosamine 1-carboxyvinyltransferase (417 aa).

22–23 provides a ligand contact to phosphoenolpyruvate; it reads KN. Residue Arg-93 participates in UDP-N-acetyl-alpha-D-glucosamine binding. Cys-117 acts as the Proton donor in catalysis. Cys-117 bears the 2-(S-cysteinyl)pyruvic acid O-phosphothioketal mark. Residues 122–126, Asp-304, and Ile-326 contribute to the UDP-N-acetyl-alpha-D-glucosamine site; that span reads RPVDQ.

This sequence belongs to the EPSP synthase family. MurA subfamily.

Its subcellular location is the cytoplasm. The catalysed reaction is phosphoenolpyruvate + UDP-N-acetyl-alpha-D-glucosamine = UDP-N-acetyl-3-O-(1-carboxyvinyl)-alpha-D-glucosamine + phosphate. It functions in the pathway cell wall biogenesis; peptidoglycan biosynthesis. Its function is as follows. Cell wall formation. Adds enolpyruvyl to UDP-N-acetylglucosamine. The sequence is that of UDP-N-acetylglucosamine 1-carboxyvinyltransferase from Neisseria meningitidis serogroup C (strain 053442).